The chain runs to 416 residues: E3 ubiquitin-protein ligase makorin-2 (416 aa).

2 C3H1-type zinc fingers span residues 2–29 (STKQITCRYFMHGVCREGSQCLFSHDLA) and 31–58 (SKPSTICKYYQKGYCAYGTRCRYDHTRP). The span at 113–122 (NLSGMAERKT) shows a compositional bias: basic and acidic residues. Positions 113 to 142 (NLSGMAERKTQPSMVSNPGSCSDPQPSPEM) are disordered. Positions 123–136 (QPSMVSNPGSCSDP) are enriched in polar residues. Phosphoserine is present on Ser-139. The C3H1-type 3 zinc finger occupies 165-192 (SNEQQLCPYAAAGECRFGDACVYLHGEV). The makorin-type Cys-His stretch occupies residues 193-222 (CEICRLQVLHPFDPEQRKAHEKICMLTFEH). An RING-type zinc finger spans residues 238-292 (CSICMEVILEKASASERRFGILSNCNHTYCLSCIRQWRCAKQFENPIIKSCPECR). A C3H1-type 4 zinc finger spans residues 321-350 (GMGKKACKYFEQGKGTCPFGSKCLYRHAYP).

As to quaternary structure, interacts with PDLIM2 (via LIM zinc-binding domain). Interacts with RELA. In terms of tissue distribution, expressed in sperm, with significantly reduced expression in sperm of patients with oligoasthenoteratozoospermia (at protein level). Widely expressed with expression in testis, ovary, small intestine, colon, peripheral blood leukocytes, fetal liver, bone marrow, thymus, lymph node and spleen.

It is found in the cytoplasm. It localises to the nucleus. The catalysed reaction is S-ubiquitinyl-[E2 ubiquitin-conjugating enzyme]-L-cysteine + [acceptor protein]-L-lysine = [E2 ubiquitin-conjugating enzyme]-L-cysteine + N(6)-ubiquitinyl-[acceptor protein]-L-lysine.. The protein operates within protein modification; protein ubiquitination. Functionally, E3 ubiquitin ligase catalyzing the covalent attachment of ubiquitin moieties onto substrate proteins. Promotes the polyubiquitination and proteasome-dependent degradation of RELA/p65, thereby suppressing RELA-mediated NF-kappaB transactivation and negatively regulating inflammatory responses. Plays a role in the regulation of spermiation and in male fertility. The polypeptide is E3 ubiquitin-protein ligase makorin-2 (MKRN2) (Homo sapiens (Human)).